A 473-amino-acid chain; its full sequence is Ribulose bisphosphate carboxylase large chain (473 aa).

The substrate site is built by N116 and T166. K168 acts as the Proton acceptor in catalysis. K170 provides a ligand contact to substrate. 3 residues coordinate Mg(2+): K194, D196, and E197. N6-carboxylysine is present on K194. H287 functions as the Proton acceptor in the catalytic mechanism. R288, H320, and S372 together coordinate substrate.

This sequence belongs to the RuBisCO large chain family. Type I subfamily. Heterohexadecamer of 8 large chains and 8 small chains. It depends on Mg(2+) as a cofactor.

The catalysed reaction is 2 (2R)-3-phosphoglycerate + 2 H(+) = D-ribulose 1,5-bisphosphate + CO2 + H2O. The enzyme catalyses D-ribulose 1,5-bisphosphate + O2 = 2-phosphoglycolate + (2R)-3-phosphoglycerate + 2 H(+). In terms of biological role, ruBisCO catalyzes two reactions: the carboxylation of D-ribulose 1,5-bisphosphate, the primary event in carbon dioxide fixation, as well as the oxidative fragmentation of the pentose substrate. Both reactions occur simultaneously and in competition at the same active site. The chain is Ribulose bisphosphate carboxylase large chain from Nitrosomonas sp. (strain ENI-11).